Reading from the N-terminus, the 807-residue chain is MSTGHTIYHSLLKLPLSVMVKSSSIPSNPIEDLKIDLERPIIYALPFRSHVDLLTLQKSALELGLPDPLSPIEIEGVKYPRYVFTSIGPKMFDTDDDLPQESLDLFKIVLKHHADNPDADFQLIPTSILWGRKPGKEGTSKPHLMPLNGPQKFVTLIKAGRDSTVRISPVVSLRYMADNHGSDEAIAHKLARVAKIHFSRQKLAASGPNLPNRQALFNRLLKSQAIEKVILEEAKSRNVDVEKVRKEAMGIMEEIATNFSYSLIKNGNRILKWLWNRLYQGLNINNASTVRKLAQEGHEIVYVPCHRSHMDYLLLSYVLYHEGLVPPHIAAGINLNFFPAGPIFRRGGAFFIRRSFKGNRLYSTIFREYLAELFAKGYSVEYFSEGGRSRTGRLLQAKTGMLAMTVQAMLRGLNRPVTLVPVYIGYEHVMEVTTYAKELRGKRKEKENAGQVLRTLRKLRNFGQGYVNFGEPISLNHYLNEHAPNWSESINPIEPQKPEWMTPVVNGIANKMMTHINDAAAANALTLCATALLAANQRALSKEDLTEQLDCYLQILRNVPYSATATVPSEDADALLEHAIKLDKFVIEKDTLGEIVSLDRNQSLLMTYYRNNIIHLFALPSLIAKLVVHHDTITVEQIQDQIKLIYPFLKAELFLHYKEEELTSIVNNHIDELVQQNLILRDGDTLQLCNANIRKLHLLAHTISETLQRYAIALTHLQASPDLGKDELEEQSQIMAQRLSRLHGINAPEFFDKGVFCILFNTLKTEGYLDEDGAAVLSKVEPLSQDIAHLLTPEIKLTIHAVMTKED.

The HXXXXD motif signature appears at 305-310; that stretch reads CHRSHM.

The protein belongs to the GPAT/DAPAT family.

The protein localises to the cell inner membrane. The catalysed reaction is sn-glycerol 3-phosphate + an acyl-CoA = a 1-acyl-sn-glycero-3-phosphate + CoA. It functions in the pathway phospholipid metabolism; CDP-diacylglycerol biosynthesis; CDP-diacylglycerol from sn-glycerol 3-phosphate: step 1/3. In Aliivibrio fischeri (strain ATCC 700601 / ES114) (Vibrio fischeri), this protein is Glycerol-3-phosphate acyltransferase.